We begin with the raw amino-acid sequence, 55 residues long: Large ribosomal subunit protein bL33m (55 aa).

It belongs to the bacterial ribosomal protein bL33 family. Component of the mitochondrial large ribosomal subunit (mt-LSU). Mature yeast 74S mitochondrial ribosomes consist of a small (37S) and a large (54S) subunit. The 37S small subunit contains a 15S ribosomal RNA (15S mt-rRNA) and at least 32 different proteins. The 54S large subunit contains a 21S rRNA (21S mt-rRNA) and at least 45 different proteins. bL33m stabilizes the tRNA acceptor stem in the E-site.

The protein localises to the mitochondrion. In terms of biological role, component of the mitochondrial ribosome (mitoribosome), a dedicated translation machinery responsible for the synthesis of mitochondrial genome-encoded proteins, including at least some of the essential transmembrane subunits of the mitochondrial respiratory chain. The mitoribosomes are attached to the mitochondrial inner membrane and translation products are cotranslationally integrated into the membrane. In Schizosaccharomyces pombe (strain 972 / ATCC 24843) (Fission yeast), this protein is Large ribosomal subunit protein bL33m (mrpl39).